The sequence spans 769 residues: Glutathione biosynthesis bifunctional protein GshAB (769 aa).

Positions 1-347 (MLDSFKENEA…QLADENENNI (347 aa)) are glutamate--cysteine ligase. One can recognise an ATP-grasp domain in the interval 514-768 (KLVLAEHGIR…IGDKILDFLF (255 aa)). 541-599 (SLFEDKQIVVKPKSTNYGWGISIFKNKFTLEDYQEALNIAFSYDSSVIIEEFIPGDEFR) provides a ligand contact to ATP. Mg(2+)-binding residues include Asp-721, Glu-738, and Asn-740. Mn(2+) is bound by residues Asp-721, Glu-738, and Asn-740.

This sequence in the N-terminal section; belongs to the glutamate--cysteine ligase type 1 family. Type 2 subfamily. As to quaternary structure, monomer. Mg(2+) is required as a cofactor. The cofactor is Mn(2+).

The enzyme catalyses L-cysteine + L-glutamate + ATP = gamma-L-glutamyl-L-cysteine + ADP + phosphate + H(+). The catalysed reaction is gamma-L-glutamyl-L-cysteine + glycine + ATP = glutathione + ADP + phosphate + H(+). Its pathway is sulfur metabolism; glutathione biosynthesis; glutathione from L-cysteine and L-glutamate: step 1/2. It functions in the pathway sulfur metabolism; glutathione biosynthesis; glutathione from L-cysteine and L-glutamate: step 2/2. Functionally, synthesizes glutathione from L-glutamate and L-cysteine via gamma-L-glutamyl-L-cysteine. The sequence is that of Glutathione biosynthesis bifunctional protein GshAB from Listeria innocua serovar 6a (strain ATCC BAA-680 / CLIP 11262).